Reading from the N-terminus, the 1162-residue chain is Cartilage intermediate layer protein 2 (1162 aa).

The N-terminal stretch at 1–20 (MASPLPLLYLCLAALHLAGA) is a signal peptide. The disordered stretch occupies residues 23-51 (ATPTEEHTSTARGLQGRPPDTGQPSPALE). Positions 146–197 (EAAWGAWGAWGLCSKSCGLGRRLRRRSCQSSSGDTCPGSPQEAQKCVRSRCP) constitute a TSP type-1 domain. 4 disulfide bridges follow: cysteine 158–cysteine 191, cysteine 162–cysteine 196, cysteine 173–cysteine 181, and cysteine 314–cysteine 360. The Ig-like C2-type domain maps to 293-377 (PYLVKHPESR…TVRSRAALLT (85 aa)). Asparagine 330 carries an N-linked (GlcNAc...) asparagine glycan.

Post-translationally, may be cleaved into 2 chains possibly by a furin-like protease upon or preceding secretion. N-glycosylated. In terms of tissue distribution, expressed in articulated and meniscal cartilage (at protein level). Also detected in heart, skeletal muscle and brain. Not detected in growth plate cartilage.

The protein resides in the secreted. It localises to the extracellular space. Its subcellular location is the extracellular matrix. Its function is as follows. May play a role in cartilage scaffolding. The sequence is that of Cartilage intermediate layer protein 2 from Mus musculus (Mouse).